Here is a 230-residue protein sequence, read N- to C-terminus: Phosphoribosylaminoimidazole-succinocarboxamide synthase (230 aa).

It belongs to the SAICAR synthetase family.

The catalysed reaction is 5-amino-1-(5-phospho-D-ribosyl)imidazole-4-carboxylate + L-aspartate + ATP = (2S)-2-[5-amino-1-(5-phospho-beta-D-ribosyl)imidazole-4-carboxamido]succinate + ADP + phosphate + 2 H(+). The protein operates within purine metabolism; IMP biosynthesis via de novo pathway; 5-amino-1-(5-phospho-D-ribosyl)imidazole-4-carboxamide from 5-amino-1-(5-phospho-D-ribosyl)imidazole-4-carboxylate: step 1/2. The chain is Phosphoribosylaminoimidazole-succinocarboxamide synthase (purC) from Thermotoga maritima (strain ATCC 43589 / DSM 3109 / JCM 10099 / NBRC 100826 / MSB8).